A 364-amino-acid chain; its full sequence is Aminomethyltransferase (364 aa).

Belongs to the GcvT family. In terms of assembly, the glycine cleavage system is composed of four proteins: P, T, L and H.

The catalysed reaction is N(6)-[(R)-S(8)-aminomethyldihydrolipoyl]-L-lysyl-[protein] + (6S)-5,6,7,8-tetrahydrofolate = N(6)-[(R)-dihydrolipoyl]-L-lysyl-[protein] + (6R)-5,10-methylene-5,6,7,8-tetrahydrofolate + NH4(+). In terms of biological role, the glycine cleavage system catalyzes the degradation of glycine. The sequence is that of Aminomethyltransferase from Thermotoga petrophila (strain ATCC BAA-488 / DSM 13995 / JCM 10881 / RKU-1).